Here is a 350-residue protein sequence, read N- to C-terminus: Deoxyhypusine synthase-like protein (350 aa).

Belongs to the deoxyhypusine synthase family.

The polypeptide is Deoxyhypusine synthase-like protein (Chlorobaculum parvum (strain DSM 263 / NCIMB 8327) (Chlorobium vibrioforme subsp. thiosulfatophilum)).